The primary structure comprises 474 residues: MSLQAPSRLLELAGQSLLRNQFLTIFTLDELPREVFPLMFMEAFSMRRFEALKLMVQAWPFLRLPLGSLMKTPHLETLQAVLRGLDTLVAQKVRPRRWKLQVLDLRDVDENFWTIWSGARVLSCSPEAMSKRQTVEDCPRMGERQPLKVFIDLCLKESTLDECLSYLFGWIHYRRGLVHLCCSKVQNYSMPTSSFRNLLERIYPDSIQELEVWKKCSLNKTGKFAPYLSQMSNLRELFLAFGYERELYVSVQWPCIPDLDSPFLCLYYPQMLYIKKISNIKEHLEHLLRYLKNPLGAFIFSDAYLTDRDMECLSQYPSLSQLKELRLIHILMWTTNLEPLGVLLEKVAATLKTLVLKDCRIQDPQLRVLLPALSHCSQLTTFNFHGNETSMNALKDLLRHTRGLSKLGLELYPAPLESLDYKGHVNWEILTPIRAELMRTLREVRQPKRIFFGPVPCPNCGSWPSEKVDFHLCS.

Residues R97 to C124 form an LRR 1; degenerate repeat. The LRR 2; degenerate repeat unit spans residues H179–Y203. An LRR 3; degenerate repeat occupies P204–Q230. An LRR 4; degenerate repeat occupies M231–C265. 5 LRR repeats span residues L266 to L291, K292 to K323, E324 to V342, A348 to H375, and C376 to H400.

It belongs to the PRAME family.

This Homo sapiens (Human) protein is PRAME family member 10.